Reading from the N-terminus, the 83-residue chain is Hainantoxin-III 9 (83 aa).

Residues 1–21 form the signal peptide; it reads MKASMFLALAGLALLFVVCYA. A propeptide spanning residues 22-48 is cleaved from the precursor; it reads SESEEKEFPIELLSKIFAVDVFKGEER. 3 disulfide bridges follow: C50–C65, C57–C70, and C64–C77. L81 is subject to Leucine amide.

The protein belongs to the neurotoxin 10 (Hwtx-1) family. 15 (Hntx-3) subfamily. In terms of assembly, monomer. In terms of tissue distribution, expressed by the venom gland.

It is found in the secreted. Selective antagonist of neuronal tetrodotoxin (TTX)-sensitive voltage-gated sodium channels (IC(50)=1270 nM on Nav1.1/SCN1A, 270 nM on Nav1.2/SCN2A, 491 nM on Nav1.3/SCN3A and 232 nM on Nav1.7/SCN9A). This toxin suppress Nav1.7 current amplitude without significantly altering the activation, inactivation, and repriming kinetics. Short extreme depolarizations partially activate the toxin-bound channel, indicating voltage-dependent inhibition of this toxin. This toxin increases the deactivation of the Nav1.7 current after extreme depolarizations. The toxin-Nav1.7 complex is gradually dissociated upon prolonged strong depolarizations in a voltage-dependent manner, and the unbound toxin rebinds to Nav1.7 after a long repolarization. Moreover, analysis of chimeric channels showed that the DIIS3-S4 linker is critical for toxin binding to Nav1.7. These data are consistent with this toxin interacting with Nav1.7 site 4 and trapping the domain II voltage sensor in the closed state. This Cyriopagopus hainanus (Chinese bird spider) protein is Hainantoxin-III 9.